Here is a 351-residue protein sequence, read N- to C-terminus: Probable dual-specificity RNA methyltransferase RlmN (351 aa).

The Proton acceptor role is filled by Glu-97. The Radical SAM core domain maps to 103–337 (YDYGNTVCIS…VTVRKERGVD (235 aa)). Cys-110 and Cys-342 are disulfide-bonded. Positions 117, 121, and 124 each coordinate [4Fe-4S] cluster. Residues 166–167 (GE), Ser-198, 221–223 (SLH), and Asn-299 each bind S-adenosyl-L-methionine. Cys-342 (S-methylcysteine intermediate) is an active-site residue.

The protein belongs to the radical SAM superfamily. RlmN family. The cofactor is [4Fe-4S] cluster.

It localises to the cytoplasm. The catalysed reaction is adenosine(2503) in 23S rRNA + 2 reduced [2Fe-2S]-[ferredoxin] + 2 S-adenosyl-L-methionine = 2-methyladenosine(2503) in 23S rRNA + 5'-deoxyadenosine + L-methionine + 2 oxidized [2Fe-2S]-[ferredoxin] + S-adenosyl-L-homocysteine. It catalyses the reaction adenosine(37) in tRNA + 2 reduced [2Fe-2S]-[ferredoxin] + 2 S-adenosyl-L-methionine = 2-methyladenosine(37) in tRNA + 5'-deoxyadenosine + L-methionine + 2 oxidized [2Fe-2S]-[ferredoxin] + S-adenosyl-L-homocysteine. Specifically methylates position 2 of adenine 2503 in 23S rRNA and position 2 of adenine 37 in tRNAs. The polypeptide is Probable dual-specificity RNA methyltransferase RlmN (Natranaerobius thermophilus (strain ATCC BAA-1301 / DSM 18059 / JW/NM-WN-LF)).